The chain runs to 510 residues: ATP synthase subunit alpha (510 aa).

Residue 169 to 176 (GDRQTGKT) participates in ATP binding.

This sequence belongs to the ATPase alpha/beta chains family. In terms of assembly, F-type ATPases have 2 components, CF(1) - the catalytic core - and CF(0) - the membrane proton channel. CF(1) has five subunits: alpha(3), beta(3), gamma(1), delta(1), epsilon(1). CF(0) has three main subunits: a(1), b(2) and c(9-12). The alpha and beta chains form an alternating ring which encloses part of the gamma chain. CF(1) is attached to CF(0) by a central stalk formed by the gamma and epsilon chains, while a peripheral stalk is formed by the delta and b chains.

Its subcellular location is the cell inner membrane. It catalyses the reaction ATP + H2O + 4 H(+)(in) = ADP + phosphate + 5 H(+)(out). In terms of biological role, produces ATP from ADP in the presence of a proton gradient across the membrane. The alpha chain is a regulatory subunit. The polypeptide is ATP synthase subunit alpha (Nitrobacter hamburgensis (strain DSM 10229 / NCIMB 13809 / X14)).